Consider the following 115-residue polypeptide: Putative HNH nuclease YajD (115 aa).

The HNH domain maps to 27 to 75; sequence CGRCSREFVYSNLRELTVHHIDHDHTNNPEDGSNWELLCLYCHDHEHSK.

This sequence belongs to the HNH nuclease family.

In Salmonella typhi, this protein is Putative HNH nuclease YajD (yajD).